A 2684-amino-acid chain; its full sequence is MFQHRTTNAQGPPPNRPMPRPPAGMPMMTSSHEHDYTNDYEDPEEMARSRGEGFSNHLLIKTTPPPQPHPNFNSYEMSMSQQRRSQQHQQPMAPPLSDCWGSGVHDSGVLHKNADGAYYIPSGSLRTTSSTLSPASGQRYLDQPHTSGGAPNPTYSDASTTLLKYPLAAGTNQNRRRQQVGTMNNGDPVAGGPMALSKKKKKFDDDSDTCSRWPSKWNILLAAALLVALFVICILLFRAPNYVYTQPAPSSDATSSAAAAASRYQDLGLRALPPAISLGERVDVEFFPKSMATTELTVTKPSRIRFNATVGSGAQLVLLMSAGVHPSLSLHDALFPIRADRIRDSKSPTHIVEEFGSRSRRSLGASSSRHRNIEILSPRSATFEQFVLEGRHYLTFINERSRVEPISFVAEELQRPTTPPKTSSSGTSGAKEHPLASVLVCESNCNQRGECVHGKCHCAPGFTGRTCDEAVCPVVCSGNGVFSGGICVCKSGFKGKECEMRHNWCEVADCNGRGRCDTDGRCRCNPGWTGEACELRACPHASCHDRGVCVNGTCYCMDGWRGNDCSVFADAIVHVPQAQSPPRRGQEPTESSKTRKAQVKPTPTSEKKKESRELQKPIIATVQVPTESSHPCSAHGQLIDDICQCESGWDSVDCSQQACQCVNGDCLDDGSCQCWKGWRGSNCTDKKCAIGCEDRGKCASDGSCKCSSGWNGENCAIDGCPNQCSGKGECGMDRRSSEWSCRCQAGSTGVDCSVSVEMHCDDGLDNDSDGLIDCDDPECCSSSSCSSESVCSTAASPIEVLMRMPPIFNANFAQRVGFLIMEKSVQSYTDSSQFNENLISVIRGRVMWGGSPTGSDDLSTYSNKSTVPLVGVRVSDAAHPLYGFTLTREDGYFDLTVNGARSVTLQFLRTQFQSVKKSVFVSPRQIIHIDDIVLYRQSGGSPPAISMAPARAKCSPTLRRIPDVVLISNWQYTSDGIETDETSDSSRIVVDSRSIFESLPIQGTDVRLVYDSARSPAAPSTMLIGLLYDRVDKELRKVHINIRIAGRRFDRVLAPRTNLTYVFAWDKMNAYRQSESGLVPVTVRVGYEYQGCDRTSERVWQTRRSQMMGATARKMIGTMWTLDIHHHLDIVNNVVEMGNGGYRLITESEPRVSTFAGLDGVKRDVECLKCEGKVDSISLFRPTTVVYAQDGSLIIGDHNMIRRVSQDGQVSTILTLGLADTSHSYYIAVSPVDGTIAISLPLHKQVWRISSLEPQDSRNNYDVLAGDGTVCASAVDSCGDGALAQNAQLIFPKGISFDKMGNLYLADSRRIRVIDTTGHIRSIGETTPDQHPIRTCAQITKLVDLQMEWPTSLTIDPITGSVLVLDTNVVYEIDVVHDVVTIALGSPTTCDLANATSSASAKSLDHRRHLIQNARDITVGTDGAIYVVESDGRRLNQVRKLSSDRSTFSILTGGKSPCSCDVAACGCDDAVSLRDVAASQAHLSSPYAVCVSPSGDVIIADSGNSKIKKVSARMAKYDGRSRTYEVTDAERQEKYTFNRHGQHSSTVSLITGRTFFNFSYQVDSPISMISEIRAASGVVLRVLKRNDSLFDLETTLGQRTTLTMSAYDGTLEQVSKRDSATSRDATKLFYKKGLLTSRIDVATAVGFEYDEYGRAIGLKRDREYWRLGEETISMGSVNTEVLLNGQRFQQVRLGEGNLAVHSTNGATTRLISLRNEGYSLASPLGTSTLYDKSSSIPDSNGEPLISRRRTKVPAIGNPQRRELTTRWDWRHVARRGDDSDGSLGRRKVAEINGVNMFSMEYDVKSNQDTLRLGSTTDDAQALLFIDYTSSGRIRRISAPEDSQMAEMNITWDGAGRKSEVTWGSWKIRLTYDNSNRLTEHAIDGARVPIKMSYAGASRRPNEIQHDGAKWNIQYDNYDRIKEVISKSQEATSFSSIALGGDEWVLKRRTSLNSKPSLVRLSREGKVLESTTPDENHYWLERKDPITGRTTEILNDEETTVVTCWSPEGAPMCSRSRNLQENTTMQGHLVARKSVTIMTPTSSEPSITSSFTYEYDDMLRVTTIQPVIEQSVLESIQLSYDERRGHVAAINGFKWARDASTSRCQGHGLMYETSKANDHRQVVERKLIFGDARASIKIIRDKAGRASESHLEISSSGTQRNQKITRTFDAAGRVASVEQNDQEPVRIIWNSDARVEKINDRVVEWNRGGALKTFQDISYQVDSIGWVVKRDNTTVFGYDGKGRLVSARSSQLRINIFYDREDRVVQIQNSKDFIHFYYGYIDTPKLVSHFSKNGKISTLFYDDDSVPFAMQSDDGTRYALLTDETSTIKAIIGDSNVLRIIDRSVFGALLPSSSSSHPFLPIGYLGGIEISEISVSILNNGRPLDLYSERYMSISPEAVVRLELNEKFSNSIDLMALEIDRQPFRVENVPEDFETWFSLAGLSPNLLPSAHLGLPASSAIVHRLLSSFPRKLRPLTHLTTVLPTRLASDISLTSPTSETSWSIDDVGFSNLLILNEDATTGEVMVEMLSDLKSEEREVISKLFDGVKSLDFATWGLVPTRHLWRAPNSKLELSSTSFSHFTMAVNKDSVELRNGKSKIVVHFSENKAEIVKKIVEELKTRENIAVWRAERKRAEAGEKTWRQWSDRETRELTSKGSVSGYDIEMKPAHQSGLLASVHSWKFRKSE.

3 disordered regions span residues Met1–Thr37, Thr127–Ser156, and Gly170–Asp204. At Met1–Lys216 the chain is on the cytoplasmic side. Over residues Gly11–Gly24 the composition is skewed to pro residues. Positions Thr127–Ser136 are enriched in low complexity. Residues Trp217–Phe237 form a helical membrane-spanning segment. Residues Arg238–Glu2684 are Extracellular-facing. 2 consecutive EGF-like domains span residues Thr463 to Glu499 and Arg501 to Glu534. 6 disulfides stabilise this stretch: Cys467–Cys476, Cys472–Cys487, Cys489–Cys498, Cys505–Cys516, Cys510–Cys522, and Cys524–Cys533. The disordered stretch occupies residues Pro576–Leu614. Composition is skewed to basic and acidic residues over residues Arg584–Lys593 and Ser605–Leu614. 2 EGF-like domains span residues Asp650–Thr684 and Ala716–Ser753. 6 disulfides stabilise this stretch: Cys654/Cys666, Cys659/Cys672, Cys674/Cys683, Cys720/Cys730, Cys724/Cys741, and Cys743/Cys752. 4 NHL repeats span residues Asp1276 to Thr1317, Arg1334 to Asp1378, Ser1398 to Leu1441, and Ala1470 to Arg1513.

It belongs to the tenascin family. Teneurin subfamily. Post-translationally, probably proteolytically processed to generate a N-terminal intracellular domain. Isoform 1 is mainly expressed in organs derived from the mesoderm, including the pharynx, vulva muscles, gonad distal tip cells, intestine and several tail neurons. Isoform 2 is mainly expressed in the organs derived from the ectoderm, including hypodermal cells, head ganglion neurons and tail neurons (at protein level).

Its subcellular location is the nucleus. The protein localises to the cell membrane. It localises to the membrane. Functionally, plays a role in the gonadal basement membrane maintenance and/or adhesion early in development. Contributes to the guidance of pharyngeal neurons. The protein is Teneurin-1 (ten-1) of Caenorhabditis elegans.